Consider the following 225-residue polypeptide: UPF0758 protein XCV4028 (225 aa).

The MPN domain occupies 102 to 224 (ALSDPPSVGR…PVSFAERGWL (123 aa)). The Zn(2+) site is built by His-173, His-175, and Asp-186. Residues 173-186 (HNHPSGNPEPSEAD) carry the JAMM motif motif.

It belongs to the UPF0758 family.

This chain is UPF0758 protein XCV4028, found in Xanthomonas euvesicatoria pv. vesicatoria (strain 85-10) (Xanthomonas campestris pv. vesicatoria).